The primary structure comprises 626 residues: Bifurcating [FeFe] hydrogenase beta subunit (626 aa).

NAD(+) is bound at residue 198-201 (GGGG). FMN-binding positions include lysine 207 and 224–228 (NGDEG). Aspartate 229 provides a ligand contact to NAD(+). FMN contacts are provided by residues 312-317 (FVCGEE) and 350-352 (INN). Positions 485, 488, 491, 531, 578, 581, 584, 588, 608, 611, 614, and 618 each coordinate [4Fe-4S] cluster. 4Fe-4S ferredoxin-type domains lie at 569–598 (KKYV…GERG) and 599–626 (KPYT…IELV).

This sequence belongs to the complex I 51 kDa subunit family. As to quaternary structure, heterotrimer composed of HydA (alpha subunit), HydB (beta subunit) and HydC (gamma subunit). Near neutral and acidic pH conditions favor oligomerization of the heterotrimeric holoenzyme. The cofactor is [2Fe-2S] cluster. Requires [4Fe-4S] cluster as cofactor. It depends on FMN as a cofactor.

It localises to the cytoplasm. The enzyme catalyses 2 H2 + 2 oxidized [2Fe-2S]-[ferredoxin] + NAD(+) = 2 reduced [2Fe-2S]-[ferredoxin] + NADH + 3 H(+). Its function is as follows. Catalyzes the oxidation of the physiological electron carriers NADH and reduced ferredoxin, coupled to the production of H(2). Acts as a bifurcating [FeFe] hydrogenase, which uses the exergonic oxidation of reduced ferredoxin to drive the unfavorable oxidation of NADH to produce H(2). The beta subunit contains flavin- and NAD-binding sites and is potentially the site for NADH oxidation, with the subsequent shuttling of electrons to the alpha subunit. The sequence is that of Bifurcating [FeFe] hydrogenase beta subunit from Thermotoga maritima (strain ATCC 43589 / DSM 3109 / JCM 10099 / NBRC 100826 / MSB8).